The chain runs to 250 residues: Ribosomal RNA small subunit methyltransferase J (250 aa).

Residues 96–97 and Asp-168 contribute to the S-adenosyl-L-methionine site; that span reads RD.

It belongs to the methyltransferase superfamily. RsmJ family.

It is found in the cytoplasm. It carries out the reaction guanosine(1516) in 16S rRNA + S-adenosyl-L-methionine = N(2)-methylguanosine(1516) in 16S rRNA + S-adenosyl-L-homocysteine + H(+). Functionally, specifically methylates the guanosine in position 1516 of 16S rRNA. This is Ribosomal RNA small subunit methyltransferase J from Neisseria gonorrhoeae (strain ATCC 700825 / FA 1090).